The sequence spans 467 residues: MTMLFVIFSGLTSMTSRLVNSMSKHMFTVASMLMAMPTLYDWEEIDVYYTSDGMADVLMLLTMYMLPLSMISNWNNMKSTLYFELVLNLGMMLLINFMCQDMTSFYMYFEASLAPLFMLMGLYGAANRDKAADYVLMYTLFSSLFMLLAMALYEVMLDNTDYQATSLLVLSLDLQCMLFLAMSMGIAVKTPLAPLHTWLPVVHSESPLAGSMLLAGMILKLAVFAMIRLILPTLSDASVTYTPFVYVMCVMTMMYTSIITLRQTDLKVIIAYSSISHMAVCMLGMLSNTMTGITGSLVLCIAHGFVSPGLFMMVGGMLYDRYHNRLMYYFQGLISYMPYLSVYFMMLSFCNMGTPLSINFIGEMLSLTGAINRAPVLGAMAALSVLLSACYQMKLTNRLTGGIKTPYMSLTSDCTYRETVLMITLIVPTMFLGFFPSWVMDFLWDAPNLLYMFMVYRTFIKMSIPWL.

A run of 13 helical transmembrane segments spans residues 21–40 (SMSK…PTLY), 54–74 (MADV…ISNW), 79–99 (STLY…NFMC), 105–125 (FYMY…LYGA), 135–155 (VLMY…LYEV), 168–188 (LVLS…GIAV), 207–227 (PLAG…FAMI), 239–259 (VTYT…TSII), 266–286 (LKVI…LGML), 297–317 (LVLC…VGGM), 330–350 (FQGL…LSFC), 367–387 (LTGA…SVLL), and 420–440 (VLMI…SWVM).

The protein belongs to the complex I subunit 4 family.

Its subcellular location is the mitochondrion membrane. It carries out the reaction a ubiquinone + NADH + 5 H(+)(in) = a ubiquinol + NAD(+) + 4 H(+)(out). Functionally, core subunit of the mitochondrial membrane respiratory chain NADH dehydrogenase (Complex I) that is believed to belong to the minimal assembly required for catalysis. Complex I functions in the transfer of electrons from NADH to the respiratory chain. The immediate electron acceptor for the enzyme is believed to be ubiquinone. The polypeptide is NADH-ubiquinone oxidoreductase chain 4 (ND4) (Debaryomyces hansenii (strain ATCC 36239 / CBS 767 / BCRC 21394 / JCM 1990 / NBRC 0083 / IGC 2968) (Yeast)).